A 361-amino-acid chain; its full sequence is 3-dehydroquinate synthase (361 aa).

Residues 72 to 77, 130 to 131, lysine 142, and lysine 151 each bind NAD(+); these read SGEKEK and TT. Positions 184, 247, and 264 each coordinate Zn(2+).

It belongs to the sugar phosphate cyclases superfamily. Dehydroquinate synthase family. Requires Co(2+) as cofactor. Zn(2+) serves as cofactor. It depends on NAD(+) as a cofactor.

Its subcellular location is the cytoplasm. The catalysed reaction is 7-phospho-2-dehydro-3-deoxy-D-arabino-heptonate = 3-dehydroquinate + phosphate. It functions in the pathway metabolic intermediate biosynthesis; chorismate biosynthesis; chorismate from D-erythrose 4-phosphate and phosphoenolpyruvate: step 2/7. Its function is as follows. Catalyzes the conversion of 3-deoxy-D-arabino-heptulosonate 7-phosphate (DAHP) to dehydroquinate (DHQ). The protein is 3-dehydroquinate synthase of Bacillus cereus (strain G9842).